The primary structure comprises 453 residues: Tubulin alpha-1 chain (453 aa).

The GTP site is built by Gln11, Glu71, Gly144, Thr145, Thr179, Asn206, and Asn228. Residue Glu71 participates in Mg(2+) binding. The active site involves Glu254. The tract at residues 433-453 (EEVGAETADGDGEEEEFGEEY) is disordered.

The protein belongs to the tubulin family. As to quaternary structure, dimer of alpha and beta chains. A typical microtubule is a hollow water-filled tube with an outer diameter of 25 nm and an inner diameter of 15 nM. Alpha-beta heterodimers associate head-to-tail to form protofilaments running lengthwise along the microtubule wall with the beta-tubulin subunit facing the microtubule plus end conferring a structural polarity. Microtubules usually have 13 protofilaments but different protofilament numbers can be found in some organisms and specialized cells. It depends on Mg(2+) as a cofactor. In terms of processing, undergoes a tyrosination/detyrosination cycle, the cyclic removal and re-addition of a C-terminal tyrosine residue by the enzymes tubulin tyrosine carboxypeptidase (TTCP) and tubulin tyrosine ligase (TTL), respectively.

The protein resides in the cytoplasm. It is found in the cytoskeleton. It catalyses the reaction GTP + H2O = GDP + phosphate + H(+). Functionally, tubulin is the major constituent of microtubules, a cylinder consisting of laterally associated linear protofilaments composed of alpha- and beta-tubulin heterodimers. Microtubules grow by the addition of GTP-tubulin dimers to the microtubule end, where a stabilizing cap forms. Below the cap, tubulin dimers are in GDP-bound state, owing to GTPase activity of alpha-tubulin. The sequence is that of Tubulin alpha-1 chain (TUBA1) from Pelvetia fastigiata (Brown alga).